We begin with the raw amino-acid sequence, 437 residues long: Adenylosuccinate synthetase (437 aa).

GTP contacts are provided by residues 25-31 (GDEGKGK), 53-55 (GHT), and Lys-62. The active-site Proton acceptor is the Asp-26. Mg(2+)-binding residues include Asp-26 and Gly-53. IMP contacts are provided by residues 26 to 29 (DEGK) and 51 to 54 (NAGH). His-54 acts as the Proton donor in catalysis. Thr-141, Arg-155, Asn-232, and Thr-247 together coordinate IMP. Thr-307 contacts GTP. 307 to 313 (TTTKRPR) contributes to the substrate binding site. Arg-311 is an IMP binding site. GTP contacts are provided by residues Arg-313, 339 to 341 (KLD), and 425 to 427 (GVG).

Belongs to the adenylosuccinate synthetase family. In terms of assembly, homodimer. It depends on Mg(2+) as a cofactor.

It localises to the cytoplasm. The catalysed reaction is IMP + L-aspartate + GTP = N(6)-(1,2-dicarboxyethyl)-AMP + GDP + phosphate + 2 H(+). It functions in the pathway purine metabolism; AMP biosynthesis via de novo pathway; AMP from IMP: step 1/2. Plays an important role in the salvage pathway for purine nucleotide biosynthesis. Catalyzes the first committed step in the biosynthesis of AMP from IMP. In Plasmodium knowlesi (strain H), this protein is Adenylosuccinate synthetase.